The sequence spans 228 residues: Ribosomal RNA small subunit methyltransferase G (228 aa).

S-adenosyl-L-methionine-binding positions include Gly70, 121–122, and Arg138; that span reads AE.

This sequence belongs to the methyltransferase superfamily. RNA methyltransferase RsmG family.

The protein localises to the cytoplasm. Its function is as follows. Specifically methylates the N7 position of a guanine in 16S rRNA. The chain is Ribosomal RNA small subunit methyltransferase G from Thermotoga petrophila (strain ATCC BAA-488 / DSM 13995 / JCM 10881 / RKU-1).